The following is a 205-amino-acid chain: Small ribosomal subunit protein uS4 (205 aa).

Residues 1–46 (MSKRASSKYKIDRRMGENIWGRPKSPVNRREYGPGQHGQRRKGKLS) are disordered. Residues 94–154 (SRLDAIVYRA…QKSKQLAIVL (61 aa)) enclose the S4 RNA-binding domain.

It belongs to the universal ribosomal protein uS4 family. In terms of assembly, part of the 30S ribosomal subunit. Contacts protein S5. The interaction surface between S4 and S5 is involved in control of translational fidelity.

Its function is as follows. One of the primary rRNA binding proteins, it binds directly to 16S rRNA where it nucleates assembly of the body of the 30S subunit. Functionally, with S5 and S12 plays an important role in translational accuracy. The protein is Small ribosomal subunit protein uS4 of Allorhizobium ampelinum (strain ATCC BAA-846 / DSM 112012 / S4) (Agrobacterium vitis (strain S4)).